A 303-amino-acid chain; its full sequence is N-acetyl-D-glucosamine kinase (303 aa).

Residues 4–11 and 133–140 each bind ATP; these read GFDIGGTK and GVGGGLIF. Zn(2+) is bound by residues His157, Cys177, Cys179, and Cys184.

It belongs to the ROK (NagC/XylR) family. NagK subfamily.

It carries out the reaction N-acetyl-D-glucosamine + ATP = N-acetyl-D-glucosamine 6-phosphate + ADP + H(+). Its pathway is cell wall biogenesis; peptidoglycan recycling. Functionally, catalyzes the phosphorylation of N-acetyl-D-glucosamine (GlcNAc) derived from cell-wall degradation, yielding GlcNAc-6-P. This is N-acetyl-D-glucosamine kinase from Shigella sonnei (strain Ss046).